The following is a 142-amino-acid chain: MKKIGLLLTIFSLCLGCLGLVPSDKAHAGNLNLTTWPSASILAVESRTVNNADKKLGEIGEKLDLNNSPLRSFRKYRGMFPTIAAQIVDNAPYEKVEDVLEMPGLTEEQKKLLEANLKNFTVTKTADVYNEGDYRLNTGSYD.

The signal sequence occupies residues 1–28 (MKKIGLLLTIFSLCLGCLGLVPSDKAHA).

It belongs to the PsbU family. As to quaternary structure, PSII is composed of 1 copy each of membrane proteins PsbA, PsbB, PsbC, PsbD, PsbE, PsbF, PsbH, PsbI, PsbJ, PsbK, PsbL, PsbM, PsbT, PsbX, PsbY, PsbZ, Psb30/Ycf12, peripheral proteins PsbO, CyanoQ (PsbQ), PsbU, PsbV and a large number of cofactors. It forms dimeric complexes.

The protein resides in the cellular thylakoid membrane. One of the extrinsic, lumenal subunits of photosystem II (PSII). PSII is a light-driven water plastoquinone oxidoreductase, using light energy to abstract electrons from H(2)O, generating a proton gradient subsequently used for ATP formation. The extrinsic proteins stabilize the structure of photosystem II oxygen-evolving complex (OEC), the ion environment of oxygen evolution and protect the OEC against heat-induced inactivation. This Trichodesmium erythraeum (strain IMS101) protein is Photosystem II extrinsic protein U.